The following is a 434-amino-acid chain: Cytochrome c biogenesis protein CcsB (434 aa).

The next 3 membrane-spanning stretches (helical) occupy residues leucine 15–isoleucine 35, serine 73–arginine 93, and valine 163–alanine 183.

This sequence belongs to the Ccs1/CcsB family. As to quaternary structure, may interact with CcsA.

The protein resides in the cellular thylakoid membrane. Its function is as follows. Required during biogenesis of c-type cytochromes (cytochrome c6 and cytochrome f) at the step of heme attachment. The chain is Cytochrome c biogenesis protein CcsB from Synechococcus sp. (strain RCC307).